The chain runs to 69 residues: uncharacterized protein (69 aa).

This is an uncharacterized protein from Lepidoptera (butterflies and moths).